We begin with the raw amino-acid sequence, 680 residues long: Lipase 1 (680 aa).

A signal peptide spans 1-34 (MKSQNKYSIRKFSVGASSILIATLLFLSGGQAQA). Residues 35-290 (AEKQVNMGNS…AKAKDDQTNK (256 aa)) constitute a propeptide that is removed on maturation. The interval 82-259 (KNLHNDKTIS…PTKDNDKKNG (178 aa)) is disordered. Over residues 84–111 (LHNDKTISEENHRKTDDLNKDQLKDDKN) the composition is skewed to basic and acidic residues. Polar residues-rich tracts occupy residues 125–138 (KNNN…NQGL), 162–193 (SQDS…SQRE), and 204–223 (QPQQ…FNNE). Basic and acidic residues predominate over residues 224–234 (QEVKPQKDEKT). The segment covering 235-246 (LSVSDLKNNQKS) has biased composition (polar residues). S408 serves as the catalytic Nucleophile. D600 serves as the catalytic Charge relay system. Position 638 (D638) interacts with Ca(2+). The active-site Charge relay system is H639. D641, D646, and D649 together coordinate Ca(2+).

This sequence belongs to the AB hydrolase superfamily. Lipase family.

It is found in the secreted. It catalyses the reaction a triacylglycerol + H2O = a diacylglycerol + a fatty acid + H(+). The protein is Lipase 1 (lip1) of Staphylococcus aureus (strain Mu50 / ATCC 700699).